A 230-amino-acid chain; its full sequence is Prolactin-3D1 (230 aa).

The signal sequence occupies residues 1 to 29 (MQLTLTLSRASGMQLFLLVSSLLLWEKVA). 2 disulfide bridges follow: C81-C200 and C217-C225. N-linked (GlcNAc...) asparagine glycans are attached at residues N109 and N158.

It belongs to the somatotropin/prolactin family.

It localises to the secreted. This is Prolactin-3D1 (Prl3d1) from Rattus norvegicus (Rat).